Reading from the N-terminus, the 128-residue chain is Entry-fusion complex protein OPG094 (128 aa).

The Intravirion portion of the chain corresponds to 1–30 (MENVPNVYFNPVFIEPTFKHSLLSVYKHRL). A helical; Signal-anchor for type III membrane protein membrane pass occupies residues 31-51 (IVLFEVFVVFILIYVFFRSEL). Topologically, residues 52–107 (NMFFMHKRKIPDPIDRLRRANLACEDDKLMIYGLPWITTQTSALSINSKPIVYKDC) are virion surface. A disulfide bond links Cys-75 and Cys-107.

It belongs to the orthopoxvirus OPG099 family. In terms of assembly, interacts with OPG086. Component of the entry fusion complex (EFC) composed of OPG053, OPG076, OPG086, OPG094, OPG095, OPG099, OPG107, OPG143, OPG104J5, OPG147 and OPG155. Except for OPG095 and OPG053, each of the EFC proteins is required for assembly or stability of the complex. Post-translationally, most cysteines are linked by disulfide bonds. They are created by the viral disulfide bond formation pathway, a poxvirus-specific redox pathway that operates on the cytoplasmic side of the MV membranes. Unglycosylated because produced in viral factories instead of the classic ER -Golgi route.

It localises to the virion membrane. Component of the entry fusion complex (EFC), which consists of 11 proteins. During cell infection, this complex mediates entry of the virion core into the host cytoplasm by a two-step mechanism consisting of lipid mixing of the viral and cellular membranes and subsequent pore formation. The protein is Entry-fusion complex protein OPG094 (OPG099) of Homo sapiens (Human).